The sequence spans 451 residues: 23S rRNA (uracil(1939)-C(5))-methyltransferase RlmD (451 aa).

Residues 1–21 (MAKHERGLRFQPTGGVKSVQI) are disordered. Residues 20–78 (QIPAGKKQRLSIERLSDDGRGIAFLEGKTWFVAGSLAGEEVEARVLNARGKVVEARTER) form the TRAM domain. Residues Cys91, Cys97, Cys100, and Cys179 each coordinate [4Fe-4S] cluster. Positions 283, 312, 317, 333, 360, and 381 each coordinate S-adenosyl-L-methionine. The active-site Nucleophile is the Cys407.

The protein belongs to the class I-like SAM-binding methyltransferase superfamily. RNA M5U methyltransferase family. RlmD subfamily.

It catalyses the reaction uridine(1939) in 23S rRNA + S-adenosyl-L-methionine = 5-methyluridine(1939) in 23S rRNA + S-adenosyl-L-homocysteine + H(+). Its function is as follows. Catalyzes the formation of 5-methyl-uridine at position 1939 (m5U1939) in 23S rRNA. This is 23S rRNA (uracil(1939)-C(5))-methyltransferase RlmD from Pseudomonas syringae pv. tomato (strain ATCC BAA-871 / DC3000).